Reading from the N-terminus, the 497-residue chain is Catalase-2 (497 aa).

Active-site residues include His71 and Asn144. Tyr354 provides a ligand contact to heme.

This sequence belongs to the catalase family. It depends on heme as a cofactor.

The enzyme catalyses 2 H2O2 = O2 + 2 H2O. Functionally, catalase involved in the oxidative stress response serving to protect cells from toxicity. For instance plays a role in defending against oxidative damage induced by excessive copper stress. Not required for maintaining normal lifespan. This is Catalase-2 from Caenorhabditis elegans.